A 276-amino-acid polypeptide reads, in one-letter code: Undecaprenyl-diphosphatase (276 aa).

7 helical membrane passes run 42–62 (AVTA…IVYF), 88–108 (ALLG…GYLG), 116–136 (LRSL…IVYA), 149–169 (MRLP…VPGV), 187–207 (VAAT…AGIF), 222–242 (SLVV…AWLL), and 253–273 (FVWY…TGLV).

It belongs to the UppP family.

It is found in the cell membrane. The catalysed reaction is di-trans,octa-cis-undecaprenyl diphosphate + H2O = di-trans,octa-cis-undecaprenyl phosphate + phosphate + H(+). Functionally, catalyzes the dephosphorylation of undecaprenyl diphosphate (UPP). Confers resistance to bacitracin. The sequence is that of Undecaprenyl-diphosphatase from Acidothermus cellulolyticus (strain ATCC 43068 / DSM 8971 / 11B).